The chain runs to 425 residues: Inner membrane protein YqcE (425 aa).

At Met1–Arg8 the chain is on the cytoplasmic side. Residues Trp9–Arg29 form a helical membrane-spanning segment. The Periplasmic portion of the chain corresponds to Tyr30–Gly48. The helical transmembrane segment at Leu49–Ala69 threads the bilayer. At Asp70–Arg75 the chain is on the cytoplasmic side. 2 helical membrane passes run Lys76–Pro96 and Pro97–Trp117. Residues Ser118–Gly138 are Cytoplasmic-facing. A helical membrane pass occupies residues Trp139 to Phe159. Over Ser160 to Lys171 the chain is Periplasmic. The chain crosses the membrane as a helical span at residues Thr172–Val192. The Cytoplasmic segment spans residues Ser193 to Arg219. The helical transmembrane segment at Ile220–Leu240 threads the bilayer. Topologically, residues Ser241–Ser259 are periplasmic. A helical membrane pass occupies residues Tyr260–Ile280. The Cytoplasmic segment spans residues Thr281–Arg291. A helical membrane pass occupies residues Val292–Ser312. Asn313 is a topological domain (periplasmic). A helical transmembrane segment spans residues Pro314 to Ser334. The Cytoplasmic segment spans residues Arg335–Thr354. The helical transmembrane segment at Thr355–Gly375 threads the bilayer. The Periplasmic segment spans residues His376–Arg388. Residues Asn389 to Phe409 traverse the membrane as a helical segment. Residues Gln410 to Lys425 are Cytoplasmic-facing.

To E.coli YihN.

Its subcellular location is the cell inner membrane. The polypeptide is Inner membrane protein YqcE (yqcE) (Escherichia coli (strain K12)).